A 381-amino-acid chain; its full sequence is Chaperone protein DnaJ (381 aa).

A J domain is found at 5–70 (DYYEVLGLQK…QKRAAYDQYG (66 aa)). The segment at 133–211 (GTTKDIQINT…CHGEGRVHKK (79 aa)) adopts a CR-type zinc-finger fold. Zn(2+) contacts are provided by C146, C149, C163, C166, C185, C188, C199, and C202. CXXCXGXG motif repeat units follow at residues 146 to 153 (CDSCGGSG), 163 to 170 (CPHCHGSG), 185 to 192 (CPTCHGSG), and 199 to 206 (CRSCHGEG).

It belongs to the DnaJ family. As to quaternary structure, homodimer. Zn(2+) is required as a cofactor.

It localises to the cytoplasm. Functionally, participates actively in the response to hyperosmotic and heat shock by preventing the aggregation of stress-denatured proteins and by disaggregating proteins, also in an autonomous, DnaK-independent fashion. Unfolded proteins bind initially to DnaJ; upon interaction with the DnaJ-bound protein, DnaK hydrolyzes its bound ATP, resulting in the formation of a stable complex. GrpE releases ADP from DnaK; ATP binding to DnaK triggers the release of the substrate protein, thus completing the reaction cycle. Several rounds of ATP-dependent interactions between DnaJ, DnaK and GrpE are required for fully efficient folding. Also involved, together with DnaK and GrpE, in the DNA replication of plasmids through activation of initiation proteins. The protein is Chaperone protein DnaJ of Haemophilus influenzae (strain 86-028NP).